The chain runs to 44 residues: Cuticle protein CP466 (44 aa).

Tandem repeats lie at residues 3–20 and 27–44.

Calcified shell.

In Cancer pagurus (Rock crab), this protein is Cuticle protein CP466.